The following is a 250-amino-acid chain: Eukaryotic translation initiation factor 4E (250 aa).

The segment at 1-72 is disordered; sequence MTTNKDVECL…QQEENPENLI (72 aa). Residues 25-39 are compositionally biased toward low complexity; sequence NVTSETTTTTNNTQN. The span at 40-62 shows a compositional bias: basic and acidic residues; it reads KETETTDNINKEETADKENKEEQ. MRNA contacts are provided by residues 96-97, 142-143, 193-198, and 239-241; these read WV, WE, RKNGDK, and RSS.

Belongs to the eukaryotic initiation factor 4E family. As to quaternary structure, eIF4F is a multi-subunit complex, the composition of which varies with external and internal environmental conditions. It is composed of at least eif4a, eif4e and eif4g.

Functionally, recognizes and binds the 7-methylguanosine-containing mRNA cap during an early step in the initiation of protein synthesis and facilitates ribosome binding by inducing the unwinding of the mRNAs secondary structures. This is Eukaryotic translation initiation factor 4E (eif4e) from Dictyostelium discoideum (Social amoeba).